The primary structure comprises 257 residues: UPF0246 protein LPC_0782 (257 aa).

The protein belongs to the UPF0246 family.

The polypeptide is UPF0246 protein LPC_0782 (Legionella pneumophila (strain Corby)).